The primary structure comprises 382 residues: Mannitol-1-phosphate 5-dehydrogenase (382 aa).

Residue 3-14 participates in NAD(+) binding; it reads ALHFGAGNIGRG. An N6-acetyllysine modification is found at Lys269.

Belongs to the mannitol dehydrogenase family.

It carries out the reaction D-mannitol 1-phosphate + NAD(+) = beta-D-fructose 6-phosphate + NADH + H(+). The sequence is that of Mannitol-1-phosphate 5-dehydrogenase from Escherichia coli O9:H4 (strain HS).